Here is a 98-residue protein sequence, read N- to C-terminus: NADH-ubiquinone oxidoreductase chain 4L (98 aa).

3 consecutive transmembrane segments (helical) span residues 1 to 21 (MPYI…GTLM), 29 to 49 (SLLC…LLSL), and 61 to 81 (LILL…LIMI).

This sequence belongs to the complex I subunit 4L family. In terms of assembly, core subunit of respiratory chain NADH dehydrogenase (Complex I) which is composed of 45 different subunits.

Its subcellular location is the mitochondrion inner membrane. The enzyme catalyses a ubiquinone + NADH + 5 H(+)(in) = a ubiquinol + NAD(+) + 4 H(+)(out). In terms of biological role, core subunit of the mitochondrial membrane respiratory chain NADH dehydrogenase (Complex I) which catalyzes electron transfer from NADH through the respiratory chain, using ubiquinone as an electron acceptor. Part of the enzyme membrane arm which is embedded in the lipid bilayer and involved in proton translocation. The chain is NADH-ubiquinone oxidoreductase chain 4L (MT-ND4L) from Mammuthus primigenius (Siberian woolly mammoth).